The primary structure comprises 384 residues: 8-amino-7-oxononanoate synthase (384 aa).

Position 21 (R21) interacts with substrate. 108–109 (GF) provides a ligand contact to pyridoxal 5'-phosphate. H133 contributes to the substrate binding site. 3 residues coordinate pyridoxal 5'-phosphate: S179, H207, and T233. Position 236 is an N6-(pyridoxal phosphate)lysine (K236). T350 is a substrate binding site.

It belongs to the class-II pyridoxal-phosphate-dependent aminotransferase family. BioF subfamily. Homodimer. Requires pyridoxal 5'-phosphate as cofactor.

It catalyses the reaction 6-carboxyhexanoyl-[ACP] + L-alanine + H(+) = (8S)-8-amino-7-oxononanoate + holo-[ACP] + CO2. It functions in the pathway cofactor biosynthesis; biotin biosynthesis. Its function is as follows. Catalyzes the decarboxylative condensation of pimeloyl-[acyl-carrier protein] and L-alanine to produce 8-amino-7-oxononanoate (AON), [acyl-carrier protein], and carbon dioxide. The chain is 8-amino-7-oxononanoate synthase from Erwinia tasmaniensis (strain DSM 17950 / CFBP 7177 / CIP 109463 / NCPPB 4357 / Et1/99).